A 344-amino-acid chain; its full sequence is tRNA N6-adenosine threonylcarbamoyltransferase (344 aa).

H112 and H116 together coordinate Fe cation. Substrate contacts are provided by residues 134–138 (LASGG), D167, G180, and N280. D308 contributes to the Fe cation binding site.

The protein belongs to the KAE1 / TsaD family. The cofactor is Fe(2+).

Its subcellular location is the cytoplasm. The enzyme catalyses L-threonylcarbamoyladenylate + adenosine(37) in tRNA = N(6)-L-threonylcarbamoyladenosine(37) in tRNA + AMP + H(+). Functionally, required for the formation of a threonylcarbamoyl group on adenosine at position 37 (t(6)A37) in tRNAs that read codons beginning with adenine. Is involved in the transfer of the threonylcarbamoyl moiety of threonylcarbamoyl-AMP (TC-AMP) to the N6 group of A37, together with TsaE and TsaB. TsaD likely plays a direct catalytic role in this reaction. This Rickettsia rickettsii (strain Iowa) protein is tRNA N6-adenosine threonylcarbamoyltransferase.